The following is a 448-amino-acid chain: tRNA modification GTPase MnmE (448 aa).

The (6S)-5-formyl-5,6,7,8-tetrahydrofolate site is built by Arg24, Glu81, and Lys120. The TrmE-type G domain occupies 216–373 (GLNVVLVGAP…LKRTLLCEAG (158 aa)). Asn226 contacts K(+). GTP-binding positions include 226-231 (NVGKSS), 245-251 (TDIAGTT), and 270-273 (DTAG). Ser230 lines the Mg(2+) pocket. Residues Thr245, Ile247, and Thr250 each contribute to the K(+) site. Thr251 is a Mg(2+) binding site. A (6S)-5-formyl-5,6,7,8-tetrahydrofolate-binding site is contributed by Lys448.

Belongs to the TRAFAC class TrmE-Era-EngA-EngB-Septin-like GTPase superfamily. TrmE GTPase family. In terms of assembly, homodimer. Heterotetramer of two MnmE and two MnmG subunits. K(+) is required as a cofactor.

The protein resides in the cytoplasm. Exhibits a very high intrinsic GTPase hydrolysis rate. Involved in the addition of a carboxymethylaminomethyl (cmnm) group at the wobble position (U34) of certain tRNAs, forming tRNA-cmnm(5)s(2)U34. The polypeptide is tRNA modification GTPase MnmE (Neisseria gonorrhoeae (strain ATCC 700825 / FA 1090)).